Here is a 408-residue protein sequence, read N- to C-terminus: D-galactonate dehydratase family member OG2516_05608 (408 aa).

Asp-215 is a Mg(2+) binding site. His-217 lines the D-arabinonate pocket. Mg(2+) is bound by residues Glu-241 and Glu-267. 4 residues coordinate D-arabinonate: Glu-267, Arg-288, His-317, and Glu-344.

This sequence belongs to the mandelate racemase/muconate lactonizing enzyme family. GalD subfamily.

Functionally, has no detectable activity with D-mannonate and with a panel of 70 other acid sugars (in vitro), in spite of the conservation of the residues that are expected to be important for catalytic activity and cofactor binding. May have evolved a divergent function. The polypeptide is D-galactonate dehydratase family member OG2516_05608 (Oceanicola granulosus (strain ATCC BAA-861 / DSM 15982 / KCTC 12143 / HTCC2516)).